Consider the following 886-residue polypeptide: Envelope glycoprotein GP350 (886 aa).

The Virion surface segment spans residues 1–839 (MEAALLVCQY…TSQPRFSNLS (839 aa)). N-linked (GlcNAc...) asparagine; by host glycans are attached at residues asparagine 47, asparagine 87, asparagine 114, asparagine 166, asparagine 169, asparagine 195, asparagine 229, asparagine 277, asparagine 318, asparagine 328, asparagine 345, asparagine 356, asparagine 378, asparagine 386, asparagine 411, asparagine 435, asparagine 443, asparagine 457, asparagine 497, asparagine 519, asparagine 533, asparagine 554, asparagine 568, asparagine 589, asparagine 603, asparagine 606, asparagine 624, and asparagine 635. The segment at 423 to 810 (KAPESTTTSP…PSTSSKLRPR (388 aa)) is disordered. Low complexity predominate over residues 428–437 (TTTSPTLNTT). Positions 442–488 (PNTTTGLPSSTHVPTNLTAPASTGPTVSTADVTSPTPAGTTSGASPV) are enriched in polar residues. The segment covering 507–595 (TSPTSAVTTP…PTPNATSPTV (89 aa)) has biased composition (low complexity). Positions 596-637 (GETSPQANTTNHTLGGTSSTPVVTSPPKNATSAVTTGQHNIT) are enriched in polar residues. A compositionally biased stretch (low complexity) spans 638-660 (SSSTSSMSLRPSSISETLSPSTS). N-linked (GlcNAc...) asparagine; by host glycans are attached at residues asparagine 662 and asparagine 680. Residues 684 to 699 (VTPASTSTHHVSTSSP) are compositionally biased toward low complexity. Polar residues predominate over residues 704-720 (GTTSQASGPGNSSTSTK). N-linked (GlcNAc...) asparagine; by host glycans are attached at residues asparagine 714, asparagine 725, asparagine 734, and asparagine 759. Positions 733 to 760 (KNATSPQAPSGQKTAVPTVTSTGGKANS) are enriched in polar residues. Residues 761–771 (TTGGKHTTGHG) are compositionally biased toward low complexity. The segment covering 773–806 (RTSTEPTTDYGGDSTTPRTRYNATTYLPPSTSSK) has biased composition (polar residues). N-linked (GlcNAc...) asparagine; by host glycans are attached at residues asparagine 794 and asparagine 837. Residues 840 to 860 (MLVLQWASLAVLTLLLLLVMA) traverse the membrane as a helical segment. Topologically, residues 861-886 (DCAFRRNLSTSHTYTTPPYDDAETYV) are intravirion.

It belongs to the Epstein-Barr GP350 family. In terms of assembly, interacts with host CR2. Post-translationally, extensively glycosylated.

It is found in the virion membrane. The protein resides in the host membrane. In terms of biological role, initiates virion attachment to host B-lymphocyte cell, leading to virus entry. Acts by binding to host CR2 at the surface of B-lymphocytes, facilitating the binding of viral glycoprotein gp42 to HLA class II molecules. Attachment triggers virion-host membrane fusion and invasion of the host cell. This chain is Envelope glycoprotein GP350, found in Homo sapiens (Human).